We begin with the raw amino-acid sequence, 249 residues long: Putative adhesin RC1281 (249 aa).

The N-terminal stretch at 1–22 (MKKLLLIAAASTALLTSGLSFA) is a signal peptide.

Functionally, adheres to biotinylated epithelial (Vero cell) proteins. The sequence is that of Putative adhesin RC1281 from Rickettsia conorii (strain ATCC VR-613 / Malish 7).